The chain runs to 384 residues: MAKHLFTSESVSEGHPDKIADQISDAVLDAILEQDPKARVACETYVKTGMVMVGGEITTSAWVDIEEITRETIREIGYVNSEMGFDANSCAVLSAIGKQSPDINQGVDREDPRELGAGDQGIMFGYASDETDVLMPAPVTYAHRLVQRQAKVRKNGTLPWLRPDAKSQVTFAYDQGKIVGIDAVVLSTQHSDCIDLPVLQEAVMEEIIKPVLPAEWLTKETKFFINPTGRFVIGGPMGDCGLTGRKIIVDTYGGAARHGGGAFSGKDPSKVDRSAAYAARYVAKNIVAAGLASRCEIQLSYAIGVADPTSIMIETFGTEKVSHDIIVDAVRQNFDLRPYGLIEMLDLLQPIYKKTAAYGHFGREEFPWEATDKVEMLRDFANFK.

An ATP-binding site is contributed by histidine 15. A Mg(2+)-binding site is contributed by aspartate 17. Glutamate 43 lines the K(+) pocket. L-methionine-binding residues include glutamate 56 and glutamine 99. Residues 99–109 form a flexible loop region; it reads QSPDINQGVDR. ATP-binding positions include 164–166, 230–231, aspartate 239, 245–246, alanine 262, and lysine 266; these read DAK, RF, and RK. Aspartate 239 serves as a coordination point for L-methionine. Residue lysine 270 coordinates L-methionine.

It belongs to the AdoMet synthase family. Homotetramer; dimer of dimers. The cofactor is Mg(2+). It depends on K(+) as a cofactor.

It is found in the cytoplasm. It carries out the reaction L-methionine + ATP + H2O = S-adenosyl-L-methionine + phosphate + diphosphate. It participates in amino-acid biosynthesis; S-adenosyl-L-methionine biosynthesis; S-adenosyl-L-methionine from L-methionine: step 1/1. Catalyzes the formation of S-adenosylmethionine (AdoMet) from methionine and ATP. The overall synthetic reaction is composed of two sequential steps, AdoMet formation and the subsequent tripolyphosphate hydrolysis which occurs prior to release of AdoMet from the enzyme. In Photobacterium profundum (strain SS9), this protein is S-adenosylmethionine synthase.